We begin with the raw amino-acid sequence, 515 residues long: MGASISSNVTKLVTDAIVRTSNEVVQTAHATNNQSIVFDVKNTSGDVVISGNTIRQTATINMVGLSQALNNSDNNIKLDQQIAQMAKAVISGLNLAQLADANNTVDSLIKTCIEIKNVTTQQCMMNTSQKINVLVEGTKGNVSIVNNEISQLATSIQSCVEKAASNNKNLQDITSSIQQAATSEAKGLSLAMIALIIVAMGLTGVGGVYAGGKIIFPAVLIGSIVSFVLYFQWTVREISSYSFVQNTLSESADCSIQKSSGESDNIGSAKSASEKCQNDNTCVAYEWQNGQAVYYKNMTIGNSCKSYYSNGAHKDTLPVIKKLIFQKGARNPVNTDVANAWLNTLDGSFWVNSDPNVLKYFGGRYGRLPYQTRYLYASGGTYVGDDVNGVGWNQQGSFGKRANRTIDWGDGPPSTITSQAEGDIWVDYHDPSLLKVYTYIAQQGGGFIWQSGQIIKGIGPIVNSNVENSKSVGFAIESKKQWLLYLAIGLLIVGVIGMAFSSGMFSKKNNGKSKQ.

Residue G2 is the site of N-myristoyl glycine; by host attachment. 3 helical membrane passes run 188-208 (LSLA…VGGV), 214-234 (IIFP…FQWT), and 482-502 (WLLY…AFSS).

This sequence belongs to the IIV-6 118L/458R family.

Its subcellular location is the membrane. In Acheta domesticus (House cricket), this protein is Putative myristoylated protein 118L.